We begin with the raw amino-acid sequence, 412 residues long: Peptidase T (412 aa).

Residue H78 coordinates Zn(2+). Residue D80 is part of the active site. D140 contributes to the Zn(2+) binding site. E174 acts as the Proton acceptor in catalysis. E175, D197, and H379 together coordinate Zn(2+).

This sequence belongs to the peptidase M20B family. Zn(2+) serves as cofactor.

The protein resides in the cytoplasm. It catalyses the reaction Release of the N-terminal residue from a tripeptide.. Its function is as follows. Cleaves the N-terminal amino acid of tripeptides. The protein is Peptidase T of Staphylococcus epidermidis (strain ATCC 12228 / FDA PCI 1200).